The following is a 291-amino-acid chain: Deaminated glutathione amidase (291 aa).

The 256-residue stretch at 13-268 (KRIGLGQITS…NDIAFVDIDL (256 aa)) folds into the CN hydrolase domain. Glu52 (proton acceptor) is an active-site residue. Lys130 (proton donor) is an active-site residue. Cys172 (nucleophile) is an active-site residue.

The protein belongs to the carbon-nitrogen hydrolase superfamily. NIT1/NIT2 family.

It catalyses the reaction N-(4-oxoglutaryl)-L-cysteinylglycine + H2O = L-cysteinylglycine + 2-oxoglutarate. In terms of biological role, catalyzes the hydrolysis of the amide bond in N-(4-oxoglutarate)-L-cysteinylglycine (deaminated glutathione), a metabolite repair reaction to dispose of the harmful deaminated glutathione. This is Deaminated glutathione amidase (nit1-1) from Dictyostelium discoideum (Social amoeba).